The primary structure comprises 197 residues: GTP cyclohydrolase-2 (197 aa).

49–53 (RVHSE) contacts GTP. Residues Cys-54, Cys-65, and Cys-67 each coordinate Zn(2+). GTP is bound by residues Gln-70, 92–94 (EGR), and Thr-114. The Proton acceptor role is filled by Asp-126. The Nucleophile role is filled by Arg-128. The GTP site is built by Thr-149 and Lys-154.

The protein belongs to the GTP cyclohydrolase II family. Homodimer. The cofactor is Zn(2+).

The catalysed reaction is GTP + 4 H2O = 2,5-diamino-6-hydroxy-4-(5-phosphoribosylamino)-pyrimidine + formate + 2 phosphate + 3 H(+). The protein operates within cofactor biosynthesis; riboflavin biosynthesis; 5-amino-6-(D-ribitylamino)uracil from GTP: step 1/4. Functionally, catalyzes the conversion of GTP to 2,5-diamino-6-ribosylamino-4(3H)-pyrimidinone 5'-phosphate (DARP), formate and pyrophosphate. The chain is GTP cyclohydrolase-2 from Pectobacterium atrosepticum (strain SCRI 1043 / ATCC BAA-672) (Erwinia carotovora subsp. atroseptica).